The following is a 582-amino-acid chain: ATP-dependent lipid A-core flippase (582 aa).

6 consecutive transmembrane segments (helical) span residues 27-48, 63-85, 144-168, 170-188, 244-266, and 283-302; these read LVVS…ISLL, FLRI…GFAS, VSIV…WQLS, VLIV…VSKR, LVSA…LFAV, and TFTV…KALT. Residues 28–310 enclose the ABC transmembrane type-1 domain; it reads VVSTIALVIN…LTSVTSEFQR (283 aa). The 237-residue stretch at 342–578 folds into the ABC transporter domain; that stretch reads VDVKDVTFTY…DGAYAQLHRI (237 aa). 376–383 is a binding site for ATP; sequence GRSGSGKS.

The protein belongs to the ABC transporter superfamily. Lipid exporter (TC 3.A.1.106) family. In terms of assembly, homodimer.

Its subcellular location is the cell inner membrane. The enzyme catalyses ATP + H2O + lipid A-core oligosaccharideSide 1 = ADP + phosphate + lipid A-core oligosaccharideSide 2.. Its function is as follows. Involved in lipopolysaccharide (LPS) biosynthesis. Translocates lipid A-core from the inner to the outer leaflet of the inner membrane. Transmembrane domains (TMD) form a pore in the inner membrane and the ATP-binding domain (NBD) is responsible for energy generation. Shows ATPase activity. The chain is ATP-dependent lipid A-core flippase from Vibrio cholerae serotype O1 (strain ATCC 39315 / El Tor Inaba N16961).